We begin with the raw amino-acid sequence, 171 residues long: 3-hydroxydecanoyl-[acyl-carrier-protein] dehydratase (171 aa).

H70 is an active-site residue.

The protein belongs to the thioester dehydratase family. FabA subfamily. In terms of assembly, homodimer.

It localises to the cytoplasm. It carries out the reaction a (3R)-hydroxyacyl-[ACP] = a (2E)-enoyl-[ACP] + H2O. The enzyme catalyses (3R)-hydroxydecanoyl-[ACP] = (2E)-decenoyl-[ACP] + H2O. The catalysed reaction is (2E)-decenoyl-[ACP] = (3Z)-decenoyl-[ACP]. It functions in the pathway lipid metabolism; fatty acid biosynthesis. In terms of biological role, necessary for the introduction of cis unsaturation into fatty acids. Catalyzes the dehydration of (3R)-3-hydroxydecanoyl-ACP to E-(2)-decenoyl-ACP and then its isomerization to Z-(3)-decenoyl-ACP. Can catalyze the dehydratase reaction for beta-hydroxyacyl-ACPs with saturated chain lengths up to 16:0, being most active on intermediate chain length. The protein is 3-hydroxydecanoyl-[acyl-carrier-protein] dehydratase of Nitrosococcus oceani (strain ATCC 19707 / BCRC 17464 / JCM 30415 / NCIMB 11848 / C-107).